The sequence spans 82 residues: RNA-binding protein Hfq (82 aa).

In terms of domain architecture, Sm spans aspartate 10–valine 70.

The protein belongs to the Hfq family. In terms of assembly, homohexamer.

RNA chaperone that binds small regulatory RNA (sRNAs) and mRNAs to facilitate mRNA translational regulation in response to envelope stress, environmental stress and changes in metabolite concentrations. Also binds with high specificity to tRNAs. This is RNA-binding protein Hfq from Parvibaculum lavamentivorans (strain DS-1 / DSM 13023 / NCIMB 13966).